A 313-amino-acid polypeptide reads, in one-letter code: Metal ABC transporter substrate-binding lipoprotein (313 aa).

Positions 1-23 are cleaved as a signal peptide; the sequence is MIEKYKNILITFIALAAIVFLVG. Cysteine 24 is lipidated: N-palmitoyl cysteine. Cysteine 24 carries S-diacylglycerol cysteine lipidation. Residues histidine 71, histidine 143, glutamate 209, and aspartate 284 each coordinate Zn(2+).

The protein belongs to the bacterial solute-binding protein 9 family. Lipoprotein receptor antigen (Lrai) subfamily.

It is found in the cell membrane. In terms of biological role, part of an ATP-driven transport system for a metal; probably for manganese. This Lactococcus lactis subsp. lactis (strain IL1403) (Streptococcus lactis) protein is Metal ABC transporter substrate-binding lipoprotein (mtsA).